We begin with the raw amino-acid sequence, 119 residues long: Small ribosomal subunit protein uS13m (119 aa).

This sequence belongs to the universal ribosomal protein uS13 family. Part of the small ribosomal subunit.

The protein resides in the mitochondrion. Located at the top of the head of the small subunit, it contacts several helices of the small subunit rRNA. The polypeptide is Small ribosomal subunit protein uS13m (RPS13) (Prototheca wickerhamii).